The following is a 100-amino-acid chain: UPF0235 protein TC_0667 (100 aa).

It belongs to the UPF0235 family.

This is UPF0235 protein TC_0667 from Chlamydia muridarum (strain MoPn / Nigg).